Here is a 131-residue protein sequence, read N- to C-terminus: Small ribosomal subunit protein bS6 (131 aa).

A disordered region spans residues 97–131 (TEASPMAKARDERDSRRGPAGERSYDEAHAEEIAE). Positions 104-131 (KARDERDSRRGPAGERSYDEAHAEEIAE) are enriched in basic and acidic residues.

The protein belongs to the bacterial ribosomal protein bS6 family.

In terms of biological role, binds together with bS18 to 16S ribosomal RNA. This chain is Small ribosomal subunit protein bS6, found in Shewanella baltica (strain OS223).